A 600-amino-acid polypeptide reads, in one-letter code: NADH-quinone oxidoreductase subunit C/D (600 aa).

Residues 1–190 are NADH dehydrogenase I subunit C; sequence MIDLMPKKNT…EPFFLNEQKE (190 aa). Positions 214 to 600 are NADH dehydrogenase I subunit D; it reads EFMFLNLGPN…IDFVMSDVDR (387 aa).

This sequence in the N-terminal section; belongs to the complex I 30 kDa subunit family. The protein in the C-terminal section; belongs to the complex I 49 kDa subunit family. In terms of assembly, NDH-1 is composed of 13 different subunits. Subunits NuoB, CD, E, F, and G constitute the peripheral sector of the complex.

Its subcellular location is the cell inner membrane. It catalyses the reaction a quinone + NADH + 5 H(+)(in) = a quinol + NAD(+) + 4 H(+)(out). Functionally, NDH-1 shuttles electrons from NADH, via FMN and iron-sulfur (Fe-S) centers, to quinones in the respiratory chain. The immediate electron acceptor for the enzyme in this species is believed to be ubiquinone. Couples the redox reaction to proton translocation (for every two electrons transferred, four hydrogen ions are translocated across the cytoplasmic membrane), and thus conserves the redox energy in a proton gradient. The sequence is that of NADH-quinone oxidoreductase subunit C/D from Buchnera aphidicola subsp. Acyrthosiphon pisum (strain APS) (Acyrthosiphon pisum symbiotic bacterium).